The chain runs to 507 residues: Probable Xaa-Pro aminopeptidase HCAG_02413 (507 aa).

Residues aspartate 283, aspartate 294, glutamate 431, and glutamate 469 each contribute to the Mn(2+) site.

The protein belongs to the peptidase M24B family. Mn(2+) serves as cofactor.

The enzyme catalyses Release of any N-terminal amino acid, including proline, that is linked to proline, even from a dipeptide or tripeptide.. Catalyzes the removal of a penultimate prolyl residue from the N-termini of peptides. The polypeptide is Probable Xaa-Pro aminopeptidase HCAG_02413 (Ajellomyces capsulatus (strain NAm1 / WU24) (Darling's disease fungus)).